A 203-amino-acid chain; its full sequence is MNSESVLEEIVLELYRNKLFKIGEYRLTSGKISPYYIDLRILPSYYDIYSKIIDISLSKLEKLNFDIVVGIESAGIIHASFIACKTHKPVGYVRKKPKQHGTKRLVEGIVADRNVLVVDDVATTGGSLEHAVNAVRSMGGIVEKAFVFVDREEGARERLKRLGVELISLMNIWFIINVLVKHRLIDEQTYYLIKNYLNREKHS.

Residues Arg-94, Lys-95, Lys-98, His-100, and 119–127 (DDVATTGGS) each bind 5-phospho-alpha-D-ribose 1-diphosphate. Orotate is bound by residues Thr-123 and Arg-151.

It belongs to the purine/pyrimidine phosphoribosyltransferase family. PyrE subfamily. In terms of assembly, homodimer. Requires Mg(2+) as cofactor.

It carries out the reaction orotidine 5'-phosphate + diphosphate = orotate + 5-phospho-alpha-D-ribose 1-diphosphate. It participates in pyrimidine metabolism; UMP biosynthesis via de novo pathway; UMP from orotate: step 1/2. Its function is as follows. Catalyzes the transfer of a ribosyl phosphate group from 5-phosphoribose 1-diphosphate to orotate, leading to the formation of orotidine monophosphate (OMP). The polypeptide is Orotate phosphoribosyltransferase (Staphylothermus marinus (strain ATCC 43588 / DSM 3639 / JCM 9404 / F1)).